We begin with the raw amino-acid sequence, 260 residues long: uncharacterized protein (260 aa).

6 consecutive transmembrane segments (helical) span residues 39-59 (IFYLLFIPLSKNFIYTDLIEA), 68-88 (IIVGIYLSYPIFLYQIWSFLI), 111-131 (FLGSCIGYYLLFPIAFTFFLG), 159-179 (LIFSLSICFQLPVLILFLFKI), 193-213 (FIYLFFFILAAILSPPDILSQ), and 214-234 (FILVIPLILFFEISLFCIKLI).

It belongs to the TatC family.

It is found in the mitochondrion membrane. This is an uncharacterized protein from Reclinomonas americana.